Reading from the N-terminus, the 274-residue chain is Subtilisin DY (274 aa).

Gln2 is a Ca(2+) binding site. The Peptidase S8 domain maps to 5-273; sequence PYGIPLIKAD…KGLINVEAAA (269 aa). Asp32 (charge relay system) is an active-site residue. Asp41 contacts Ca(2+). The active-site Charge relay system is His63. Residues Leu74, Asn76, Val80, Ala168, Tyr170, and Val173 each contribute to the Ca(2+) site. The active-site Charge relay system is Ser220.

This sequence belongs to the peptidase S8 family. The cofactor is Ca(2+).

The protein resides in the secreted. The catalysed reaction is Hydrolysis of proteins with broad specificity for peptide bonds, and a preference for a large uncharged residue in P1. Hydrolyzes peptide amides.. Its function is as follows. Subtilisin is an extracellular alkaline serine protease, it catalyzes the hydrolysis of proteins and peptide amides. This is Subtilisin DY (apr) from Bacillus licheniformis.